We begin with the raw amino-acid sequence, 159 residues long: E3 ubiquitin ligase complex SCF subunit sconC (159 aa).

The tract at residues Ile101–Glu159 is interaction with the F-box domain of F-box proteins.

It belongs to the SKP1 family. Component of the SCF (SKP1-CUL1-F-box protein) E3 ubiquitin ligase complexes.

The protein operates within protein modification; protein ubiquitination. Its function is as follows. Essential component of the SCF (SKP1-CUL1-F-box protein) E3 ubiquitin ligase complexes, which mediate the ubiquitination and subsequent proteasomal degradation of target proteins. Controls sulfur metabolite repression, probably by mediating the inactivation or degradation of the metR transcription factor. The sequence is that of E3 ubiquitin ligase complex SCF subunit sconC (sconC) from Aspergillus clavatus (strain ATCC 1007 / CBS 513.65 / DSM 816 / NCTC 3887 / NRRL 1 / QM 1276 / 107).